A 160-amino-acid chain; its full sequence is Probable small nuclear ribonucleoprotein-associated protein B (160 aa).

A Sm domain is found at 4-86 (SKNNKMMAHL…IVSMTVDGPP (83 aa)). The interval 80–160 (MTVDGPPPRD…YGGPPGGRPF (81 aa)) is disordered. Composition is skewed to gly residues over residues 99–113 (GGAG…GGRG), 128–143 (APGG…GGPG), and 150–160 (GYGGPPGGRPF).

Belongs to the snRNP SmB/SmN family.

It is found in the nucleus. Its subcellular location is the cytoplasm. The protein localises to the cytosol. Plays a role in pre-mRNA splicing as a core component of the spliceosomal U1, U2, U4 and U5 small nuclear ribonucleoproteins (snRNPs), the building blocks of the spliceosome. This chain is Probable small nuclear ribonucleoprotein-associated protein B (snr-2), found in Caenorhabditis elegans.